The sequence spans 150 residues: Large ribosomal subunit protein bL9 (150 aa).

The protein belongs to the bacterial ribosomal protein bL9 family.

Its function is as follows. Binds to the 23S rRNA. This chain is Large ribosomal subunit protein bL9, found in Corynebacterium jeikeium (strain K411).